A 136-amino-acid polypeptide reads, in one-letter code: MQSREPSGWRTAERRRGWRCRGVPTPSGDRGPGAARPAARGGAGETTGQQRPLQVPGASAAAARTRLLRWHHRVPSPRATRSPGSIRRTSPCSGGPDRPERPECADACCYLLDPFTLPLIQDFFRGCAASDFDRRD.

The disordered stretch occupies residues 1 to 100; sequence MQSREPSGWR…PCSGGPDRPE (100 aa). A compositionally biased stretch (basic residues) spans 66–75; sequence RLLRWHHRVP.

This is an uncharacterized protein from Homo sapiens (Human).